A 387-amino-acid chain; its full sequence is Succinate--CoA ligase [ADP-forming] subunit beta (387 aa).

Positions 9–245 constitute an ATP-grasp domain; that stretch reads KDLLESYGLK…KSQENAKELK (237 aa). Residues Lys-46, 53-55, Glu-100, Tyr-103, and Glu-108 each bind ATP; that span reads GRG. Positions 200 and 214 each coordinate Mg(2+). Substrate is bound by residues Asn-265 and 322 to 324; that span reads GIV.

This sequence belongs to the succinate/malate CoA ligase beta subunit family. As to quaternary structure, heterotetramer of two alpha and two beta subunits. Requires Mg(2+) as cofactor.

It catalyses the reaction succinate + ATP + CoA = succinyl-CoA + ADP + phosphate. The enzyme catalyses GTP + succinate + CoA = succinyl-CoA + GDP + phosphate. It functions in the pathway carbohydrate metabolism; tricarboxylic acid cycle; succinate from succinyl-CoA (ligase route): step 1/1. Its function is as follows. Succinyl-CoA synthetase functions in the citric acid cycle (TCA), coupling the hydrolysis of succinyl-CoA to the synthesis of either ATP or GTP and thus represents the only step of substrate-level phosphorylation in the TCA. The beta subunit provides nucleotide specificity of the enzyme and binds the substrate succinate, while the binding sites for coenzyme A and phosphate are found in the alpha subunit. The sequence is that of Succinate--CoA ligase [ADP-forming] subunit beta from Francisella tularensis subsp. mediasiatica (strain FSC147).